The chain runs to 770 residues: Amyloid-beta precursor protein (770 aa).

Residues 1-17 (MLPSLALLLLAAWTVRA) form the signal peptide. Topologically, residues 18 to 701 (LEVPTDGNAG…AEDVGSNKGA (684 aa)) are extracellular. A GFLD subdomain region spans residues 28–123 (LLAEPQIAMF…PYRCLVGEFV (96 aa)). Residues 28–189 (LLAEPQIAMF…RGVEFVCCPL (162 aa)) form the E1 domain. Intrachain disulfides connect Cys-38–Cys-62, Cys-73–Cys-117, Cys-98–Cys-105, Cys-133–Cys-187, Cys-144–Cys-174, and Cys-158–Cys-186. 96–110 (NWCKRGRKQCKTHTH) contacts heparin. The segment at 131–189 (DKCKFLHQERMDVCETHLHWHTVAKETCSEKSTNLHDYGMLLPCGIDKFRGVEFVCCPL) is cuBD subdomain. Positions 147, 151, and 168 each coordinate Cu(2+). The interval 181-188 (GVEFVCCP) is zinc-binding. Positions 183, 186, and 187 each coordinate Zn(2+). Over residues 193 to 207 (SDSVDSADAEEDDSD) the composition is skewed to acidic residues. Positions 193–284 (SDSVDSADAE…TTTTTTESVE (92 aa)) are disordered. Ser-198 is subject to Phosphoserine; by CK2. The residue at position 206 (Ser-206) is a Phosphoserine; by CK1. A sulfotyrosine mark is found at Tyr-217 and Tyr-262. Acidic residues predominate over residues 228-264 (VAEEEEVADVEEEEADDDEDVEDGDEVEEEAEEPYEE). Over residues 268-281 (RTTSTATTTTTTTE) the composition is skewed to low complexity. Intrachain disulfides connect Cys-291–Cys-341, Cys-300–Cys-324, and Cys-316–Cys-337. Residues 291–341 (CSEQAETGPCRAMISRWYFDVTEGKCVPFFYGGCGGNRNNFDTEEYCMAVC) enclose the BPTI/Kunitz inhibitor domain. At Tyr-336 the chain carries Sulfotyrosine. The OX-2 motif lies at 344-365 (VSTQSLLKTTSEPLPQDPDKLP). An E2 domain is found at 374–565 (AVDKYLETPG…EEIQDEVDEL (192 aa)). The interval 391-423 (FQKAKERLEAKHRERMSQVMREWEEAERQAKNL) is heparin-binding. Residue Ser-441 is modified to Phosphoserine. A heparin-binding region spans residues 491–522 (FNMLKKYVRAEQKDRQHTLKHFEHVRMVDPKK). Tyr-497 bears the Phosphotyrosine mark. Residues 523–540 (AAQIRSQVMTHLRVIYER) form a collagen-binding region. N-linked (GlcNAc...) asparagine glycans are attached at residues Asn-542 and Asn-571. The Cu(2+) site is built by His-677 and His-685. Residues His-677 and His-685 each contribute to the Zn(2+) site. Residues 695–722 (VGSNKGAIIGLMVGGVVIATVIVITLVM) are interaction with PSEN1. The chain crosses the membrane as a helical span at residues 702–722 (IIGLMVGGVVIATVIVITLVM). Topologically, residues 723 to 770 (LKKKQYTSIHHGVVEVDAAVTPEERHLSKMQQNGYENPTYKFFEQMQN) are cytoplasmic. Residues 724 to 734 (KKKQYTSIHHG) carry the Basolateral sorting signal motif. Thr-729 is modified (phosphothreonine). Residue Ser-730 is modified to Phosphoserine; by APP-kinase I. The segment at 732–751 (HHGVVEVDAAVTPEERHLSK) is interaction with G(o)-alpha. Position 743 is a phosphothreonine; by CDK5 and MAPK10 and LRRK2 (Thr-743). The segment at 756–770 (GYENPTYKFFEQMQN) is interaction with DAB2. Positions 756–770 (GYENPTYKFFEQMQN) are required for the interaction with KIF5B and for anterograde transport in axons. Tyr-757 is subject to Phosphotyrosine; by ABL1. The YENPXY motif; contains endocytosis signal motif lies at 757 to 762 (YENPTY). A Glycyl lysine isopeptide (Lys-Gly) (interchain with G-Cter in ubiquitin) cross-link involves residue Lys-763.

Belongs to the APP family. Binds, via its C-terminus, to the PID domain of several cytoplasmic proteins, including APBB family members, the APBA family, MAPK8IP1, SHC1, NUMB and DAB1. Binding to DAB1 inhibits its serine phosphorylation. Interacts (via NPXY motif) with DAB2 (via PID domain); the interaction is impaired by tyrosine phosphorylation of the NPXY motif. Also interacts with GPCR-like protein BPP, APPBP1, IB1, KNS2 (via its TPR domains), APPBP2 (via BaSS) and DDB1. In vitro, it binds MAPT via the MT-binding domains. Associates with microtubules in the presence of ATP and in a kinesin-dependent manner. Interacts, through a C-terminal domain, with GNAO1. Amyloid-beta protein 42 binds CHRNA7 in hippocampal neurons. Amyloid-beta associates with HADH2. Interacts with ANKS1B and AGER. Interacts with CPEB1. Interacts with ITM2B. Interacts with ITM2C. Interacts with IDE. Can form homodimers; dimerization is enhanced in the presence of Cu(2+) ions. Can form homodimers; this is promoted by heparin binding. Amyloid-beta protein 40 interacts with S100A9. CTF-alpha product of APP interacts with GSAP. Isoform APP695 interacts with SORL1 (via N-terminal ectodomain); this interaction retains APP in the trans-Golgi network and reduces processing into soluble APP-alpha and amyloid-beta peptides. The C99 fragment also interacts with SORL1. Isoform APP751 interacts with SORL1. Isoform APP770 interacts with SORL1. Interacts with PLD3. Interacts with VDAC1. Interacts with NSG1; could regulate APP processing. Amyloid-beta protein 42 interacts with FPR2. Interacts with SYT7. Interacts (via transmembrane region) with PSEN1; the interaction is direct. Interacts with LRRK2. Interacts (via cytoplasmic domain) with KIF5B. Interacts (via C-terminus) with APBB2/FE65L1 (via C-terminus). Interacts (via intracellular domain) with APBB3. Post-translationally, proteolytically processed under normal cellular conditions. Cleavage either by alpha-secretase, beta-secretase or theta-secretase leads to generation and extracellular release of soluble APP peptides, S-APP-alpha and S-APP-beta, and the retention of corresponding membrane-anchored C-terminal fragments, C80, C83 and C99. Subsequent processing of C80 and C83 by gamma-secretase yields P3 peptides. This is the major secretory pathway and is non-amyloidogenic. Alternatively, presenilin/nicastrin-mediated gamma-secretase processing of C99 releases the amyloid-beta proteins, amyloid-beta protein 40 and amyloid-beta protein 42, major components of amyloid plaques, and the cytotoxic C-terminal fragments, gamma-CTF(50), gamma-CTF(57) and gamma-CTF(59). PSEN1 cleavage is more efficient with C83 than with C99 as substrate (in vitro). Amyloid-beta protein 40 and Amyloid-beta protein 42 are cleaved by ACE. Many other minor amyloid-beta peptides, amyloid-beta 1-X peptides, are found in cerebral spinal fluid (CSF) including the amyloid-beta X-15 peptides, produced from the cleavage by alpha-secretase. Proteolytically cleaved by caspases during neuronal apoptosis. Cleavage at Asp-739 by either CASP6, CASP8 or CASP9 results in the production of the neurotoxic C31 peptide and the increased production of amyloid-beta peptides. In terms of processing, N- and O-glycosylated. Post-translationally, phosphorylation in the C-terminal on tyrosine, threonine and serine residues is neuron-specific. Phosphorylation can affect APP processing, neuronal differentiation and interaction with other proteins. Phosphorylated on Thr-743 in neuronal cells by Cdc5 kinase and Mapk10, in dividing cells by Cdc2 kinase in a cell-cycle dependent manner with maximal levels at the G2/M phase and, in vitro, by GSK-3-beta. The Thr-743 phosphorylated form causes a conformational change which reduces binding of Fe65 family members. In dopaminergic (DA) neurons, phosphorylation on Thr-743 by LRKK2 promotes the production and the nuclear translocation of the APP intracellular domain (AICD) which induces DA neuron apoptosis. Phosphorylation on Tyr-757 is required for SHC binding. Phosphorylated in the extracellular domain by casein kinases on both soluble and membrane-bound APP. This phosphorylation is inhibited by heparin. Extracellular binding and reduction of copper, results in a corresponding oxidation of Cys-144 and Cys-158, and the formation of a disulfide bond. In terms of processing, trophic-factor deprivation triggers the cleavage of surface APP by beta-secretase to release sAPP-beta which is further cleaved to release an N-terminal fragment of APP (N-APP). Post-translationally, amyloid-beta peptides are degraded by IDE. Sulfated on tyrosine residues. As to expression, expressed in the brain with expression in cortex, cerebellum, hippocampus, olfactory bulb, neurons, astrocytes and microglia (at protein level). Expressed in the retinal lens. Expressed at a low level in muscle cells (at protein level). Expressed in kidney. In terms of tissue distribution, widely expressed. Expressed in several different brain regions including hippocampus, substantia nigra pars compacta and cerebellum. Within the cerebellum, abundantly expressed in Purkinje cells. As to expression, expressed in the brain, kidney and liver. Expressed in several different brain regions including hippocampus, substantia nigra pars compacta and cerebellum. Within the cerebellum, abundantly expressed in Purkinje cells. Expressed in several different brain regions including hippocampus, substantia nigra pars compacta and cerebellum. Within the cerebellum, abundantly expressed in Purkinje cells.

The protein localises to the cell membrane. Its subcellular location is the membrane. It localises to the perikaryon. It is found in the cell projection. The protein resides in the growth cone. The protein localises to the clathrin-coated pit. Its subcellular location is the early endosome. It localises to the cytoplasmic vesicle. It is found in the golgi apparatus. The protein resides in the trans-Golgi network. The protein localises to the endoplasmic reticulum. Its subcellular location is the secreted. It localises to the cell surface. It is found in the nucleus. The protein resides in the cytoplasm. Functions as a cell surface receptor and performs physiological functions on the surface of neurons relevant to neurite growth, neuronal adhesion and axonogenesis. Interaction between APP molecules on neighboring cells promotes synaptogenesis. Involved in cell mobility and transcription regulation through protein-protein interactions. Can promote transcription activation through binding to APBB1-KAT5 and inhibit Notch signaling through interaction with Numb. Couples to apoptosis-inducing pathways such as those mediated by G(o) and JIP. Inhibits G(o)-alpha ATPase activity. Acts as a kinesin I membrane receptor, mediating the axonal transport of beta-secretase and presenilin 1. By acting as a kinesin I membrane receptor, plays a role in axonal anterograde transport of cargo towards synapses in axons. May be involved in copper homeostasis/oxidative stress through copper ion reduction. Can regulate neurite outgrowth through binding to components of the extracellular matrix such as heparin and collagen I and IV. The splice isoforms that contain the BPTI domain possess protease inhibitor activity. Induces a AGER-dependent pathway that involves activation of p38 MAPK, resulting in internalization of amyloid-beta peptide and leading to mitochondrial dysfunction in cultured cortical neurons. Provides Cu(2+) ions for GPC1 which are required for release of nitric oxide (NO) and subsequent degradation of the heparan sulfate chains on GPC1. Its function is as follows. Amyloid-beta peptides are lipophilic metal chelators with metal-reducing activity. Binds transient metals such as copper, zinc and iron. Rat and mouse amyloid-beta peptides bind only weakly transient metals and have little reducing activity due to substitutions of transient metal chelating residues. Amyloid-beta protein 42 may activate mononuclear phagocytes in the brain and elicit inflammatory responses. Promotes both tau aggregation and TPK II-mediated phosphorylation. Also binds GPC1 in lipid rafts. In terms of biological role, the gamma-CTF peptides as well as the caspase-cleaved peptides, including C31, are potent enhancers of neuronal apoptosis. The polypeptide is Amyloid-beta precursor protein (Mus musculus (Mouse)).